We begin with the raw amino-acid sequence, 486 residues long: Glutamate--tRNA ligase (486 aa).

A 'HIGH' region motif is present at residues 12–22; it reads PSPTGTPHVGL. Positions 256-260 match the 'KMSKS' region motif; sequence KLSKR. Lysine 259 contacts ATP.

This sequence belongs to the class-I aminoacyl-tRNA synthetase family. Glutamate--tRNA ligase type 1 subfamily. As to quaternary structure, monomer.

The protein localises to the cytoplasm. The catalysed reaction is tRNA(Glu) + L-glutamate + ATP = L-glutamyl-tRNA(Glu) + AMP + diphosphate. Functionally, catalyzes the attachment of glutamate to tRNA(Glu) in a two-step reaction: glutamate is first activated by ATP to form Glu-AMP and then transferred to the acceptor end of tRNA(Glu). This is Glutamate--tRNA ligase from Mycolicibacterium smegmatis (strain ATCC 700084 / mc(2)155) (Mycobacterium smegmatis).